Consider the following 561-residue polypeptide: Zinc finger protein 394 (561 aa).

Ser12 is modified (phosphoserine). A Glycyl lysine isopeptide (Lys-Gly) (interchain with G-Cter in SUMO2) cross-link involves residue Lys40. Positions 43–62 (EDSLGSWEPSYPAASPDPET) are disordered. One can recognise an SCAN box domain in the interval 64-146 (RLHFRQLRYQ…AVVRALQRAL (83 aa)). Residues 155 to 230 (VTFEDMAVSL…LQEAFQGKRP (76 aa)) form the KRAB domain. Residues Lys203 and Lys228 each participate in a glycyl lysine isopeptide (Lys-Gly) (interchain with G-Cter in SUMO2) cross-link. A compositionally biased stretch (basic and acidic residues) spans 238–247 (THEDRVEKQS). The interval 238-283 (THEDRVEKQSGDPLPLKLENSPEAEGFNSISDVNKNGSIEGEDSKN) is disordered. Residue Lys254 forms a Glycyl lysine isopeptide (Lys-Gly) (interchain with G-Cter in SUMO2) linkage. The span at 265-274 (NSISDVNKNG) shows a compositional bias: polar residues. A Glycyl lysine isopeptide (Lys-Gly) (interchain with G-Cter in SUMO2) cross-link involves residue Lys282. C2H2-type zinc fingers lie at residues 358 to 380 (YKCG…QRIH), 386 to 408 (YGCQ…QRTH), 414 to 436 (YTCL…QSTH), 442 to 463 (FKCE…QRLH), 469 to 491 (YKCE…HRIH), 497 to 519 (YGCS…QRIH), and 525 to 547 (YKCL…QRIH). Residue Lys443 forms a Glycyl lysine isopeptide (Lys-Gly) (interchain with G-Cter in SUMO2) linkage.

Belongs to the krueppel C2H2-type zinc-finger protein family.

The protein resides in the nucleus. Functionally, may be involved in transcriptional regulation. The sequence is that of Zinc finger protein 394 (ZNF394) from Pan paniscus (Pygmy chimpanzee).